Reading from the N-terminus, the 332-residue chain is Glycerol-3-phosphate dehydrogenase [NAD(P)+] (332 aa).

W11, R30, and K108 together coordinate NADPH. Residues K108, G137, and S139 each coordinate sn-glycerol 3-phosphate. A141 provides a ligand contact to NADPH. 5 residues coordinate sn-glycerol 3-phosphate: K192, D245, S255, R256, and N257. K192 acts as the Proton acceptor in catalysis. Residue R256 coordinates NADPH. NADPH-binding residues include V280 and E282.

Belongs to the NAD-dependent glycerol-3-phosphate dehydrogenase family.

Its subcellular location is the cytoplasm. It catalyses the reaction sn-glycerol 3-phosphate + NAD(+) = dihydroxyacetone phosphate + NADH + H(+). The enzyme catalyses sn-glycerol 3-phosphate + NADP(+) = dihydroxyacetone phosphate + NADPH + H(+). The protein operates within membrane lipid metabolism; glycerophospholipid metabolism. Functionally, catalyzes the reduction of the glycolytic intermediate dihydroxyacetone phosphate (DHAP) to sn-glycerol 3-phosphate (G3P), the key precursor for phospholipid synthesis. This is Glycerol-3-phosphate dehydrogenase [NAD(P)+] from Burkholderia orbicola (strain AU 1054).